The chain runs to 519 residues: Cytosol aminopeptidase (519 aa).

At serine 42 the chain carries Phosphoserine. Lysine 45 carries the N6-succinyllysine modification. Serine 54 is modified (phosphoserine). An N6-succinyllysine mark is found at lysine 61 and lysine 103. Phosphoserine occurs at positions 180 and 194. Zn(2+) is bound by residues leucine 202, methionine 203, and threonine 205. Serine 238 is subject to Phosphoserine. Zn(2+)-binding residues include lysine 282 and aspartate 287. Lysine 282, aspartate 287, serine 292, and lysine 294 together coordinate substrate. Aspartate 287 lines the Mg(2+) pocket. Residue lysine 294 is part of the active site. Arginine 303, aspartate 305, aspartate 364, and glutamate 366 together coordinate Zn(2+). Substrate is bound by residues aspartate 305 and aspartate 364. Mg(2+) contacts are provided by aspartate 364 and glutamate 366. The active site involves arginine 368. Lysine 455 carries the N6-acetyllysine; alternate modification. Lysine 455 is subject to N6-succinyllysine; alternate. Lysine 476 carries the post-translational modification N6-succinyllysine. N6-acetyllysine; alternate is present on lysine 489. The residue at position 489 (lysine 489) is an N6-succinyllysine; alternate.

The protein belongs to the peptidase M17 family. In terms of assembly, homohexamer. Zn(2+) serves as cofactor. It depends on Mn(2+) as a cofactor.

Its subcellular location is the cytoplasm. The enzyme catalyses Release of an N-terminal amino acid, Xaa-|-Yaa-, in which Xaa is preferably Leu, but may be other amino acids including Pro although not Arg or Lys, and Yaa may be Pro. Amino acid amides and methyl esters are also readily hydrolyzed, but rates on arylamides are exceedingly low.. It carries out the reaction an S-substituted L-cysteinylglycine + H2O = an S-substituted L-cysteine + glycine. The catalysed reaction is L-cysteinylglycine + H2O = L-cysteine + glycine. It catalyses the reaction S-benzyl-L-cysteinylglycine + H2O = S-benzyl-L-cysteine + glycine. The enzyme catalyses Release of N-terminal proline from a peptide.. With respect to regulation, zofenoprilat inhibits Cys-Gly hydrolysis activity. Functionally, cytosolic metallopeptidase that catalyzes the removal of unsubstituted N-terminal hydrophobic amino acids from various peptides. The presence of Zn(2+) ions is essential for the peptidase activity, and the association with other cofactors can modulate the substrate spectificity of the enzyme. For instance, in the presence of Mn(2+), it displays a specific Cys-Gly hydrolyzing activity of Cys-Gly-S-conjugates. Involved in the metabolism of glutathione and in the degradation of glutathione S-conjugates, which may play a role in the control of the cell redox status. The protein is Cytosol aminopeptidase of Bos taurus (Bovine).